A 189-amino-acid polypeptide reads, in one-letter code: MKKSLSLVLASGSPRRKELLAQLGYDFDIVLPDIEEAKQADEQAQDYVLRLSLEKAQAGLALAKPDSVVLGSDTVVVCDDRVLEKPKSFEDSKRMLTDLSGRRHQVMTAVSVVSSEQQHSVVVTTDVWFKPLTHEEIEQYWQSGEPCDKAGSYGIQGLGGRFVTRIEGSYHAVVGLPLFETDQLIQEFL.

The Proton acceptor role is filled by D73.

This sequence belongs to the Maf family. YhdE subfamily. A divalent metal cation is required as a cofactor.

It localises to the cytoplasm. The catalysed reaction is dTTP + H2O = dTMP + diphosphate + H(+). The enzyme catalyses UTP + H2O = UMP + diphosphate + H(+). Its function is as follows. Nucleoside triphosphate pyrophosphatase that hydrolyzes dTTP and UTP. May have a dual role in cell division arrest and in preventing the incorporation of modified nucleotides into cellular nucleic acids. The chain is dTTP/UTP pyrophosphatase from Vibrio parahaemolyticus serotype O3:K6 (strain RIMD 2210633).